The sequence spans 243 residues: Terpene cyclase paxB (243 aa).

Transmembrane regions (helical) follow at residues 23-43 (FVVG…YISF), 49-69 (GMSI…CLVF), 78-98 (GVFW…ITFS), 112-132 (ISLI…ALAL), 134-154 (IGPA…LSVG), 172-194 (LWAS…WMYW), and 205-225 (LVLW…ICFW).

It belongs to the paxB family.

The protein localises to the membrane. It functions in the pathway secondary metabolite biosynthesis. Functionally, terpene cyclase; part of the ATM2 gene cluster that mediates the biosynthesis of paxilline, a mycotoxin that acts as an inhibitor of mammalian maxi-K channels. PaxG, the geranylgeranyl diphosphate (GGPP) synthase is proposed to catalyze the first step in paxilline biosynthesis. Condensation of indole-3-glycerol phosphate with GGPP by paxC then forms 3-geranylgeranylindole (3-GGI), followed by epoxidation and cyclization of this intermediate (by paxM and paxB) to form paspaline. Paspaline is subsequently converted to 13-desoxypaxilline by paxP, the latter being then converted to paxilline by paxQ. Finally paxilline can be mono- and di-prenylated by paxD. In Penicillium paxilli, this protein is Terpene cyclase paxB.